The chain runs to 352 residues: DNA polymerase IV (352 aa).

Residues 4–185 form the UmuC domain; that stretch reads IIHVDMDCFF…LPLSKIPGVG (182 aa). Asp-8 and Asp-103 together coordinate Mg(2+). The active site involves Glu-104.

This sequence belongs to the DNA polymerase type-Y family. Monomer. Mg(2+) is required as a cofactor.

It localises to the cytoplasm. The enzyme catalyses DNA(n) + a 2'-deoxyribonucleoside 5'-triphosphate = DNA(n+1) + diphosphate. In terms of biological role, poorly processive, error-prone DNA polymerase involved in untargeted mutagenesis. Copies undamaged DNA at stalled replication forks, which arise in vivo from mismatched or misaligned primer ends. These misaligned primers can be extended by PolIV. Exhibits no 3'-5' exonuclease (proofreading) activity. May be involved in translesional synthesis, in conjunction with the beta clamp from PolIII. In Yersinia pestis bv. Antiqua (strain Antiqua), this protein is DNA polymerase IV.